Consider the following 581-residue polypeptide: uncharacterized protein (581 aa).

S28 carries the post-translational modification Phosphoserine. The next 11 membrane-spanning stretches (helical) occupy residues L61–A81, A100–L120, C125–K145, I187–A207, W214–F234, I340–L360, A382–G402, L426–G446, V458–L478, V486–F506, and I522–G542.

It belongs to the major facilitator superfamily.

Its subcellular location is the cytoplasm. The protein resides in the cell cortex. It is found in the membrane. This is an uncharacterized protein from Schizosaccharomyces pombe (strain 972 / ATCC 24843) (Fission yeast).